Consider the following 471-residue polypeptide: Cleavage and polyadenylation specificity factor subunit 7 (471 aa).

The disordered stretch occupies residues V34 to P68. Residues E50–K62 show a composition bias toward pro residues. An RRM domain is found at A82 to R162. Residues E176–S220 are disordered. Over residues H190–D199 the composition is skewed to basic and acidic residues. Phosphothreonine is present on T203. S205 bears the Phosphoserine mark. K354 is covalently cross-linked (Glycyl lysine isopeptide (Lys-Gly) (interchain with G-Cter in SUMO2)). Residues S409–H471 form a disordered region. Residues S413 and S423 each carry the phosphoserine modification. An arg/Ser-rich domain region spans residues R418–R469. 2 stretches are compositionally biased toward basic and acidic residues: residues E425–S434 and L441–H471.

This sequence belongs to the RRM CPSF6/7 family. As to quaternary structure, component of the cleavage factor Im (CFIm) complex which is a heterotetramer composed of two subunits of NUDT21/CPSF5 and two subunits of CPSF6 or CPSF7 or a heterodimer of CPSF6 and CPSF7. The cleavage factor Im (CFIm) complex associates with the CPSF and CSTF complexes to promote the assembly of the core mRNA 3'-processing machinery. Interacts with NUDT21/CPSF5. Interacts (via Arg/Ser-rich domain) with FIP1L1 (preferentially via unphosphorylated form and Arg/Glu/Asp-rich region); this interaction mediates, at least in part, the interaction between the CFIm and CPSF complexes and may be inhibited by CPSF7 hyper-phosphorylation. Phosphorylated. Post-translationally, asymmetrically dimethylated on arginine residues by PRMT1.

It localises to the nucleus. The protein localises to the cytoplasm. In terms of biological role, component of the cleavage factor Im (CFIm) complex that functions as an activator of the pre-mRNA 3'-end cleavage and polyadenylation processing required for the maturation of pre-mRNA into functional mRNAs. CFIm contributes to the recruitment of multiprotein complexes on specific sequences on the pre-mRNA 3'-end, so called cleavage and polyadenylation signals (pA signals). Most pre-mRNAs contain multiple pA signals, resulting in alternative cleavage and polyadenylation (APA) producing mRNAs with variable 3'-end formation. The CFIm complex acts as a key regulator of cleavage and polyadenylation site choice during APA through its binding to 5'-UGUA-3' elements localized in the 3'-untranslated region (UTR) for a huge number of pre-mRNAs. CPSF7 activates directly the mRNA 3'-processing machinery. Binds to pA signals in RNA substrates. In Mus musculus (Mouse), this protein is Cleavage and polyadenylation specificity factor subunit 7.